The chain runs to 319 residues: Protein sprouty homolog 1 (319 aa).

An N-acetylmethionine modification is found at Met1. Residues 54-160 are disordered; sequence TEGPSVVKRP…ERAIRTQPKQ (107 aa). A compositionally biased stretch (basic and acidic residues) spans 69 to 79; sequence PRQEKHERTHE. Residues 112-131 show a composition bias toward low complexity; sequence SRSTSTGSAASSGSNSSASS. The region spanning 183-295 is the SPR domain; it reads QCGKCKCGEC…CYDWIHRPGC (113 aa).

Belongs to the sprouty family. As to quaternary structure, forms heterodimers with SPRY2. Interacts with TESK1. Interacts with CAV1 (via C-terminus).

The protein localises to the cytoplasm. Its subcellular location is the membrane. Inhibits fibroblast growth factor (FGF)-induced retinal lens fiber differentiation, probably by inhibiting FGF-mediated phosphorylation of ERK1/2. Inhibits TGFB-induced epithelial-to-mesenchymal transition in lens epithelial cells. The polypeptide is Protein sprouty homolog 1 (SPRY1) (Cervus elaphus (Red deer)).